The following is a 337-amino-acid chain: Ornithine carbamoyltransferase (337 aa).

Residues 57 to 60 (STRT), Gln-84, Arg-108, and 135 to 138 (HPTQ) each bind carbamoyl phosphate. Residues Asn-167, Asp-231, and 235 to 236 (SM) each bind L-ornithine. Carbamoyl phosphate contacts are provided by residues 272–273 (CL) and Arg-317.

It belongs to the aspartate/ornithine carbamoyltransferase superfamily. OTCase family.

It is found in the cytoplasm. The catalysed reaction is carbamoyl phosphate + L-ornithine = L-citrulline + phosphate + H(+). It participates in amino-acid degradation; L-arginine degradation via ADI pathway; carbamoyl phosphate from L-arginine: step 2/2. In terms of biological role, reversibly catalyzes the transfer of the carbamoyl group from carbamoyl phosphate (CP) to the N(epsilon) atom of ornithine (ORN) to produce L-citrulline. In Streptococcus equi subsp. zooepidemicus (strain MGCS10565), this protein is Ornithine carbamoyltransferase.